Consider the following 396-residue polypeptide: NADH-quinone oxidoreductase subunit D (396 aa).

This sequence belongs to the complex I 49 kDa subunit family. As to quaternary structure, NDH-1 is composed of 14 different subunits. Subunits NuoB, C, D, E, F, and G constitute the peripheral sector of the complex.

The protein resides in the cell inner membrane. The enzyme catalyses a quinone + NADH + 5 H(+)(in) = a quinol + NAD(+) + 4 H(+)(out). Functionally, NDH-1 shuttles electrons from NADH, via FMN and iron-sulfur (Fe-S) centers, to quinones in the respiratory chain. The immediate electron acceptor for the enzyme in this species is believed to be ubiquinone. Couples the redox reaction to proton translocation (for every two electrons transferred, four hydrogen ions are translocated across the cytoplasmic membrane), and thus conserves the redox energy in a proton gradient. This is NADH-quinone oxidoreductase subunit D from Bartonella tribocorum (strain CIP 105476 / IBS 506).